The sequence spans 811 residues: Transmembrane protease serine 6 (811 aa).

At 1-55 (MLLLFHSKRMPVAEAPQVAGGQGDGGDGEEAEPEGMFKACEDSKRKARGYLRLVP) the chain is on the cytoplasmic side. Residues 56–76 (LFVLLALLVLASAGVLLWYFL) form a helical; Signal-anchor for type II membrane protein membrane-spanning segment. The Extracellular segment spans residues 77 to 811 (GYKAEVMVSQ…VISWIQQVVT (735 aa)). One can recognise an SEA domain in the interval 84–209 (VSQVYSGSLR…EGLVILEASV (126 aa)). N-linked (GlcNAc...) asparagine glycans are attached at residues asparagine 136, asparagine 184, asparagine 216, asparagine 338, asparagine 433, and asparagine 453. CUB domains are found at residues 213–336 (AALN…QACE) and 335–452 (CEVN…YGLY). Cysteine 335 and cysteine 366 are disulfide-bonded. 3 consecutive LDL-receptor class A domains span residues 457 to 489 (PCPGEFLCSVNGLCVPACDGVKDCPNGLDERNC), 490 to 526 (VCRATFQCKEDSTCISLPKVCDGQPDCLNGSDEEQCQ), and 530 to 567 (PCGTFTFQCEDRSCVKKPNPQCDGRPDCRDGSDEEHCD). 10 disulfide bridges follow: cysteine 458-cysteine 470, cysteine 464-cysteine 480, cysteine 474-cysteine 489, cysteine 491-cysteine 503, cysteine 497-cysteine 516, cysteine 510-cysteine 525, cysteine 531-cysteine 543, cysteine 538-cysteine 557, cysteine 551-cysteine 566, and cysteine 602-cysteine 618. Residue asparagine 518 is glycosylated (N-linked (GlcNAc...) asparagine). Residues 577–811 (IVGGAVSSEG…VISWIQQVVT (235 aa)) enclose the Peptidase S1 domain. Catalysis depends on charge relay system residues histidine 617 and aspartate 668. 3 cysteine pairs are disulfide-bonded: cysteine 702–cysteine 768, cysteine 733–cysteine 747, and cysteine 758–cysteine 787. Catalysis depends on serine 762, which acts as the Charge relay system.

Belongs to the peptidase S1 family. Interacts with HJV. In terms of processing, the single-chain zymogen undergoes autoproteolytic processing. This results in TMPRSS6 shedding from the cell surface and conversion into an activated two-chains form which is released extracellularly. The process involves a trans-activation mechanism that requires TMPRSS6 oligomerization.

The protein localises to the cell membrane. In terms of biological role, membrane-bound serine protease. Through the cleavage of cell surface hemojuvelin (HJV), a regulator of the expression of the iron absorption-regulating hormone hepicidin/HAMP, plays a role in iron homeostasis. This Homo sapiens (Human) protein is Transmembrane protease serine 6 (TMPRSS6).